The chain runs to 286 residues: Meiotically up-regulated gene 64 protein (286 aa).

It localises to the cytoplasm. In terms of biological role, has a role in meiosis. The sequence is that of Meiotically up-regulated gene 64 protein (mug64) from Schizosaccharomyces pombe (strain 972 / ATCC 24843) (Fission yeast).